The primary structure comprises 206 residues: FMN-dependent NADH:quinone oxidoreductase (206 aa).

Residues Ser9, 15–17 (SVS), and 139–142 (SRGG) contribute to the FMN site.

Belongs to the azoreductase type 1 family. As to quaternary structure, homodimer. It depends on FMN as a cofactor.

It carries out the reaction 2 a quinone + NADH + H(+) = 2 a 1,4-benzosemiquinone + NAD(+). The catalysed reaction is N,N-dimethyl-1,4-phenylenediamine + anthranilate + 2 NAD(+) = 2-(4-dimethylaminophenyl)diazenylbenzoate + 2 NADH + 2 H(+). In terms of biological role, quinone reductase that provides resistance to thiol-specific stress caused by electrophilic quinones. Functionally, also exhibits azoreductase activity. Catalyzes the reductive cleavage of the azo bond in aromatic azo compounds to the corresponding amines. The chain is FMN-dependent NADH:quinone oxidoreductase from Cupriavidus necator (strain ATCC 17699 / DSM 428 / KCTC 22496 / NCIMB 10442 / H16 / Stanier 337) (Ralstonia eutropha).